The primary structure comprises 428 residues: Putative zinc metalloprotease SAR1238 (428 aa).

Zn(2+) is bound at residue His21. Glu22 is an active-site residue. Zn(2+) is bound at residue His25. The next 4 helical transmembrane spans lie at 172–194 (FLTL…IGLA), 309–331 (GSTY…GFSF), 352–374 (IISL…LIPI), and 401–420 (TTII…LVTW). One can recognise a PDZ domain in the interval 186–269 (ALVLFIGLAY…TKSVELTPKK (84 aa)).

This sequence belongs to the peptidase M50B family. Zn(2+) serves as cofactor.

It is found in the cell membrane. The polypeptide is Putative zinc metalloprotease SAR1238 (Staphylococcus aureus (strain MRSA252)).